A 138-amino-acid chain; its full sequence is Flavodoxin (138 aa).

The 136-residue stretch at 1-136 (MKIVYWSGTG…DCIEFGKKIA (136 aa)) folds into the Flavodoxin-like domain.

The protein belongs to the flavodoxin family. FMN serves as cofactor.

In terms of biological role, low-potential electron donor to a number of redox enzymes. In Clostridium beijerinckii (Clostridium MP), this protein is Flavodoxin.